The following is a 794-amino-acid chain: Zinc finger protein 148 (794 aa).

Lysine 6 participates in a covalent cross-link: Glycyl lysine isopeptide (Lys-Gly) (interchain with G-Cter in SUMO2). Phosphoserine is present on serine 51. Glycyl lysine isopeptide (Lys-Gly) (interchain with G-Cter in SUMO2) cross-links involve residues lysine 88, lysine 115, and lysine 132. A C2H2-type 1 zinc finger spans residues 171-193 (HVCEHCNAAFRTNYHLQRHVFIH). Threonine 194 bears the Phosphothreonine mark. 2 consecutive C2H2-type zinc fingers follow at residues 199-221 (FQCS…EKIH) and 227-249 (FRCD…KRTH). A Phosphoserine modification is found at serine 250. A C2H2-type 4 zinc finger spans residues 255–278 (YQCEYCLQYFSRTDRVLKHKRMCH). A Glycyl lysine isopeptide (Lys-Gly) (interchain with G-Cter in SUMO2) cross-link involves residue lysine 291. Residues 298-336 (EEDSGFSTSPKDNSLPKKKRQKTEKKSSGMDKESALDKS) form a disordered region. Phosphoserine occurs at positions 301 and 306. Lysine 308 is covalently cross-linked (Glycyl lysine isopeptide (Lys-Gly) (interchain with G-Cter in SUMO2)). The segment covering 321 to 336 (EKKSSGMDKESALDKS) has biased composition (basic and acidic residues). A Glycyl lysine isopeptide (Lys-Gly) (interchain with G-Cter in SUMO1); alternate cross-link involves residue lysine 356. Residue lysine 356 forms a Glycyl lysine isopeptide (Lys-Gly) (interchain with G-Cter in SUMO2); alternate linkage. Residue lysine 402 forms a Glycyl lysine isopeptide (Lys-Gly) (interchain with G-Cter in SUMO2) linkage. Serine 412 is modified (phosphoserine). Residues lysine 421 and lysine 424 each participate in a glycyl lysine isopeptide (Lys-Gly) (interchain with G-Cter in SUMO2) cross-link. A compositionally biased stretch (polar residues) spans 574–588 (NSSEVPEVTPSENVG). The segment at 574–599 (NSSEVPEVTPSENVGSSSQASSSDKA) is disordered. The residue at position 607 (lysine 607) is an N6-acetyllysine. A phosphoserine mark is found at serine 665 and serine 784.

It belongs to the krueppel C2H2-type zinc-finger protein family. In terms of assembly, interacts with HNRNPDL. Interacts with the 5FMC complex; the interaction requires association with CHTOP. Interacts with CAVIN1. In terms of processing, sumoylated with SUMO2. Desumoylated by SENP3, resulting in the stimulation of transcription of its target genes.

It localises to the nucleus. In terms of biological role, involved in transcriptional regulation. Represses the transcription of a number of genes including gastrin, stromelysin and enolase. Binds to the G-rich box in the enhancer region of these genes. This Pongo abelii (Sumatran orangutan) protein is Zinc finger protein 148 (ZNF148).